Reading from the N-terminus, the 317-residue chain is Melanocyte-stimulating hormone receptor (317 aa).

The segment at 1–28 (MPMQGAQGRLRGSLNATPPTTPHSGLAG) is disordered. The Extracellular segment spans residues 1–37 (MPMQGAQGRLRGSLNATPPTTPHSGLAGNQTGPWCLE). Asparagine 29 is a glycosylation site (N-linked (GlcNAc...) asparagine). A helical membrane pass occupies residues 38–63 (VSIPDELFLSLGLVSLVENMLVVAAI). Residues 64–72 (AKNRNLHSP) are Cytoplasmic-facing. A helical transmembrane segment spans residues 73-93 (MYYFICCLAVSDLLVSVSNVL). Over 94–118 (ETAVMLLLEAGVLAAWAGVVQQLDN) the chain is Extracellular. A helical transmembrane segment spans residues 119–140 (AIDVFICGSMVSSLCFLGAIAV). Topologically, residues 141–163 (DRYITIFYALRYHSIVTLPRARW) are cytoplasmic. Residues 164–183 (AIATIWAASVVCSTLFIAYY) form a helical membrane-spanning segment. At 184–191 (DCTAVLLC) the chain is on the extracellular side. Residues 192–211 (LVSFFLALVVLMAVLYMHML) form a helical membrane-spanning segment. Residues 212–240 (ARACLHARSIARLHKRWRPVHQGLGLKGA) are Cytoplasmic-facing. Residues 241 to 266 (ATLSILLGSFFLCWGPFFLHLTLIVL) form a helical membrane-spanning segment. Residues 267 to 279 (CPQHPTCSCVFKN) lie on the Extracellular side of the membrane. Residues 280 to 300 (FKLFLTLIICNSIVDPLIYAF) traverse the membrane as a helical segment. The Cytoplasmic segment spans residues 301–317 (RSQELRKTLKEVLLCSW). A lipid anchor (S-palmitoyl cysteine) is attached at cysteine 315.

It belongs to the G-protein coupled receptor 1 family. Interacts with MGRN1, but does not undergo MGRN1-mediated ubiquitination; this interaction competes with GNAS-binding and thus inhibits agonist-induced cAMP production. Interacts with OPN3; the interaction results in a decrease in MC1R-mediated cAMP signaling and ultimately a decrease in melanin production in melanocytes.

Its subcellular location is the cell membrane. Functionally, receptor for MSH (alpha, beta and gamma) and ACTH. The activity of this receptor is mediated by G proteins which activate adenylate cyclase. Mediates melanogenesis, the production of eumelanin (black/brown) and phaeomelanin (red/yellow), via regulation of cAMP signaling in melanocytes. This is Melanocyte-stimulating hormone receptor (MC1R) from Mammuthus primigenius (Siberian woolly mammoth).